The sequence spans 89 residues: RNA-binding protein Hfq (89 aa).

The Sm domain occupies 9-68; it reads EPFLNALRKEKVPVSIYLVNGIKLQGQIESFDQFVILLRNNVNQMVYKHAISTVVPARNV. The tract at residues 70–89 is disordered; sequence TAPPVPTETHAQSSEEFGNI. Residues 78-89 show a composition bias toward polar residues; that stretch reads THAQSSEEFGNI.

Belongs to the Hfq family. As to quaternary structure, homohexamer.

Functionally, RNA chaperone that binds small regulatory RNA (sRNAs) and mRNAs to facilitate mRNA translational regulation in response to envelope stress, environmental stress and changes in metabolite concentrations. Also binds with high specificity to tRNAs. The polypeptide is RNA-binding protein Hfq (Alkalilimnicola ehrlichii (strain ATCC BAA-1101 / DSM 17681 / MLHE-1)).